Consider the following 347-residue polypeptide: Dual-specificity RNA methyltransferase RlmN (347 aa).

The Proton acceptor role is filled by Glu-93. In terms of domain architecture, Radical SAM core spans 99–327 (DEGRNTLCIS…VITRDSRGSD (229 aa)). A disulfide bond links Cys-106 and Cys-332. [4Fe-4S] cluster is bound by residues Cys-113, Cys-117, and Cys-120. S-adenosyl-L-methionine contacts are provided by residues 158–159 (GE), Ser-190, 213–215 (SLN), and Asn-289. Cys-332 serves as the catalytic S-methylcysteine intermediate.

It belongs to the radical SAM superfamily. RlmN family. Requires [4Fe-4S] cluster as cofactor.

The protein localises to the cytoplasm. The catalysed reaction is adenosine(2503) in 23S rRNA + 2 reduced [2Fe-2S]-[ferredoxin] + 2 S-adenosyl-L-methionine = 2-methyladenosine(2503) in 23S rRNA + 5'-deoxyadenosine + L-methionine + 2 oxidized [2Fe-2S]-[ferredoxin] + S-adenosyl-L-homocysteine. The enzyme catalyses adenosine(37) in tRNA + 2 reduced [2Fe-2S]-[ferredoxin] + 2 S-adenosyl-L-methionine = 2-methyladenosine(37) in tRNA + 5'-deoxyadenosine + L-methionine + 2 oxidized [2Fe-2S]-[ferredoxin] + S-adenosyl-L-homocysteine. Functionally, specifically methylates position 2 of adenine 2503 in 23S rRNA and position 2 of adenine 37 in tRNAs. m2A2503 modification seems to play a crucial role in the proofreading step occurring at the peptidyl transferase center and thus would serve to optimize ribosomal fidelity. The sequence is that of Dual-specificity RNA methyltransferase RlmN from Pelobacter propionicus (strain DSM 2379 / NBRC 103807 / OttBd1).